We begin with the raw amino-acid sequence, 258 residues long: Imidazole glycerol phosphate synthase subunit HisF (258 aa).

Active-site residues include Asp-11 and Asp-130.

The protein belongs to the HisA/HisF family. Heterodimer of HisH and HisF.

It is found in the cytoplasm. It catalyses the reaction 5-[(5-phospho-1-deoxy-D-ribulos-1-ylimino)methylamino]-1-(5-phospho-beta-D-ribosyl)imidazole-4-carboxamide + L-glutamine = D-erythro-1-(imidazol-4-yl)glycerol 3-phosphate + 5-amino-1-(5-phospho-beta-D-ribosyl)imidazole-4-carboxamide + L-glutamate + H(+). It functions in the pathway amino-acid biosynthesis; L-histidine biosynthesis; L-histidine from 5-phospho-alpha-D-ribose 1-diphosphate: step 5/9. IGPS catalyzes the conversion of PRFAR and glutamine to IGP, AICAR and glutamate. The HisF subunit catalyzes the cyclization activity that produces IGP and AICAR from PRFAR using the ammonia provided by the HisH subunit. In Escherichia fergusonii (strain ATCC 35469 / DSM 13698 / CCUG 18766 / IAM 14443 / JCM 21226 / LMG 7866 / NBRC 102419 / NCTC 12128 / CDC 0568-73), this protein is Imidazole glycerol phosphate synthase subunit HisF.